The primary structure comprises 59 residues: Large ribosomal subunit protein uL30 (59 aa).

It belongs to the universal ribosomal protein uL30 family. As to quaternary structure, part of the 50S ribosomal subunit.

The protein is Large ribosomal subunit protein uL30 of Clostridium kluyveri (strain ATCC 8527 / DSM 555 / NBRC 12016 / NCIMB 10680 / K1).